The primary structure comprises 401 residues: Odorant receptor 88a (401 aa).

Residues 1-26 (MKPTEIKKPYRMEEFLRPQMFQEVAQ) are Cytoplasmic-facing. The chain crosses the membrane as a helical span at residues 27-47 (MVHFQWRRNPVDNSMVNASMV). Residues 48–52 (PFCLS) lie on the Extracellular side of the membrane. A helical membrane pass occupies residues 53-73 (AFLNVLFFGCNGWDIIGHFWL). The Cytoplasmic portion of the chain corresponds to 74–142 (GHPANQNPPV…NFWQRYRFIR (69 aa)). Residues 143–163 (IYSHLGGPMFCVVPLALFLLT) form a helical membrane-spanning segment. Over 164–191 (HEGKDTPVAQHEQLLGGWLPCGVRKDPN) the chain is Extracellular. The helical transmembrane segment at 192–212 (FYLLVWSFDLMCTTCGVSFFV) threads the bilayer. The Cytoplasmic portion of the chain corresponds to 213 to 277 (TFDNLFNVMQ…LCRKYNDIFK (65 aa)). A helical membrane pass occupies residues 278–298 (VAFLVSNFVGAGSLCFYLFML). Over 299–303 (SETSD) the chain is Extracellular. Residues 304-324 (VLIIAQYILPTLVLVGFTFEI) form a helical membrane-spanning segment. Topologically, residues 325 to 370 (CLRGTQLEKASEGLESSLRSQEWYLGSRRYRKFYLLWTQYCQRTQQ) are cytoplasmic. The chain crosses the membrane as a helical span at residues 371 to 391 (LGAFGLIQVNMVHFTEIMQLA). Topologically, residues 392–401 (YRLFTFLKSH) are extracellular.

This sequence belongs to the insect chemoreceptor superfamily. Heteromeric odorant receptor channel (TC 1.A.69) family. Or49a subfamily. As to quaternary structure, interacts with Orco. Complexes exist early in the endomembrane system in olfactory sensory neurons (OSNs), coupling these complexes to the conserved ciliary trafficking pathway. Expressed in olfactory sensory neurons in the antenna.

It localises to the cell membrane. Its function is as follows. Odorant receptor which mediates acceptance or avoidance behavior, depending on its substrates. The odorant receptor repertoire encodes a large collection of odor stimuli that vary widely in identity, intensity, and duration. May form a complex with Orco to form odorant-sensing units, providing sensitive and prolonged odorant signaling and calcium permeability. This chain is Odorant receptor 88a (Or88a), found in Drosophila melanogaster (Fruit fly).